A 595-amino-acid polypeptide reads, in one-letter code: Elongation factor 4 (595 aa).

Positions 2–184 (SHIRNFSIIA…RLVATIPPPT (183 aa)) constitute a tr-type G domain. GTP contacts are provided by residues 14 to 19 (DHGKST) and 131 to 134 (NKMD).

The protein belongs to the TRAFAC class translation factor GTPase superfamily. Classic translation factor GTPase family. LepA subfamily.

It is found in the cell inner membrane. It carries out the reaction GTP + H2O = GDP + phosphate + H(+). Functionally, required for accurate and efficient protein synthesis under certain stress conditions. May act as a fidelity factor of the translation reaction, by catalyzing a one-codon backward translocation of tRNAs on improperly translocated ribosomes. Back-translocation proceeds from a post-translocation (POST) complex to a pre-translocation (PRE) complex, thus giving elongation factor G a second chance to translocate the tRNAs correctly. Binds to ribosomes in a GTP-dependent manner. In Pseudomonas syringae pv. tomato (strain ATCC BAA-871 / DC3000), this protein is Elongation factor 4.